Reading from the N-terminus, the 334-residue chain is Large ribosomal subunit protein uL3 (334 aa).

The span at methionine 1–arginine 10 shows a compositional bias: basic residues. The interval methionine 1–alanine 21 is disordered.

This sequence belongs to the universal ribosomal protein uL3 family. Part of the 50S ribosomal subunit. Forms a cluster with proteins L14 and L24e.

In terms of biological role, one of the primary rRNA binding proteins, it binds directly near the 3'-end of the 23S rRNA, where it nucleates assembly of the 50S subunit. The chain is Large ribosomal subunit protein uL3 from Methanococcus maripaludis (strain C5 / ATCC BAA-1333).